Reading from the N-terminus, the 154-residue chain is Cyanate hydratase (154 aa).

Catalysis depends on residues Arg-100, Glu-103, and Ser-126.

The protein belongs to the cyanase family.

It catalyses the reaction cyanate + hydrogencarbonate + 3 H(+) = NH4(+) + 2 CO2. Functionally, catalyzes the reaction of cyanate with bicarbonate to produce ammonia and carbon dioxide. The chain is Cyanate hydratase from Aspergillus clavatus (strain ATCC 1007 / CBS 513.65 / DSM 816 / NCTC 3887 / NRRL 1 / QM 1276 / 107).